The primary structure comprises 278 residues: Large ribosomal subunit protein uL2 (278 aa).

Residues 201 to 278 (HGNINDGKAG…IMRSRHQRKK (78 aa)) are disordered. The span at 210 to 221 (GRSRWRGKRPHV) shows a compositional bias: basic residues.

This sequence belongs to the universal ribosomal protein uL2 family. Part of the 50S ribosomal subunit. Forms a bridge to the 30S subunit in the 70S ribosome.

One of the primary rRNA binding proteins. Required for association of the 30S and 50S subunits to form the 70S ribosome, for tRNA binding and peptide bond formation. It has been suggested to have peptidyltransferase activity; this is somewhat controversial. Makes several contacts with the 16S rRNA in the 70S ribosome. The chain is Large ribosomal subunit protein uL2 from Agrobacterium fabrum (strain C58 / ATCC 33970) (Agrobacterium tumefaciens (strain C58)).